The chain runs to 177 residues: Probable nicotinate-nucleotide adenylyltransferase (177 aa).

This sequence belongs to the NadD family.

The catalysed reaction is nicotinate beta-D-ribonucleotide + ATP + H(+) = deamido-NAD(+) + diphosphate. It participates in cofactor biosynthesis; NAD(+) biosynthesis; deamido-NAD(+) from nicotinate D-ribonucleotide: step 1/1. Its function is as follows. Catalyzes the reversible adenylation of nicotinate mononucleotide (NaMN) to nicotinic acid adenine dinucleotide (NaAD). The sequence is that of Probable nicotinate-nucleotide adenylyltransferase from Nitratiruptor sp. (strain SB155-2).